A 156-amino-acid polypeptide reads, in one-letter code: Snaclec jerdonibitin subunit alpha (156 aa).

An N-terminal signal peptide occupies residues 1 to 23; it reads MGRFIFVSFGLLVVFLSLSGTGA. Disulfide bonds link C25–C36, C53–C150, and C125–C142. In terms of domain architecture, C-type lectin spans 32-151; the sequence is FRQYCYRVFK…CGQQHLFMCK (120 aa).

It belongs to the snaclec family. In terms of assembly, heterodimer of subunits alpha and beta; disulfide-linked. Expressed by the venom gland.

The protein resides in the secreted. Functionally, snaclec that dose-dependently inhibits platelet aggregation induced by ristocetin or low-dose thrombin, but not by high-dose thrombin. Binds to GPIbalpha (GP1BA). In vivo, also dose-dependently induces thrombocytopenia of mice and platelet counts remains at very low level even after 18 hours intravenous injection. The polypeptide is Snaclec jerdonibitin subunit alpha (Protobothrops jerdonii (Jerdon's pitviper)).